Here is a 253-residue protein sequence, read N- to C-terminus: Chloride intracellular channel protein 4 (253 aa).

Ala-2 is modified (N-acetylalanine). The segment at 2 to 101 is required for insertion into the membrane; that stretch reads ALSMPLNGLK…EEFLEEVLCP (100 aa). At Ser-4 the chain carries Phosphoserine. N6-acetyllysine is present on Lys-24. The chain crosses the membrane as a helical span at residues 37 to 57; it reads FSQRLFMILWLKGVVFSVSTV. In terms of domain architecture, GST C-terminal spans 81 to 244; sequence NSEVKTDVNK…PSDKEVEIAY (164 aa). Lys-130 carries the post-translational modification N6-acetyllysine. A phosphoserine mark is found at Ser-132, Ser-167, and Ser-236. The residue at position 244 (Tyr-244) is a Phosphotyrosine.

It belongs to the chloride channel CLIC family. As to quaternary structure, monomer. Interacts with HRH3.

Its subcellular location is the cytoplasm. The protein localises to the cytoskeleton. It localises to the microtubule organizing center. It is found in the centrosome. The protein resides in the cytoplasmic vesicle membrane. Its subcellular location is the nucleus. The protein localises to the cell membrane. It localises to the mitochondrion. It is found in the cell junction. It catalyses the reaction chloride(in) = chloride(out). The catalysed reaction is thiocyanate(in) = thiocyanate(out). It carries out the reaction nitrate(in) = nitrate(out). The enzyme catalyses iodide(out) = iodide(in). It catalyses the reaction bromide(in) = bromide(out). The catalysed reaction is fluoride(in) = fluoride(out). It carries out the reaction choline(out) = choline(in). Its function is as follows. In the soluble state, catalyzes glutaredoxin-like thiol disulfide exchange reactions with reduced glutathione as electron donor. Can insert into membranes and form voltage-dependent multi-ion conductive channels. Membrane insertion seems to be redox-regulated and may occur only under oxidizing conditions. Has alternate cellular functions like a potential role in angiogenesis or in maintaining apical-basolateral membrane polarity during mitosis and cytokinesis. Could also promote endothelial cell proliferation and regulate endothelial morphogenesis (tubulogenesis). Promotes cell-surface expression of HRH3. The sequence is that of Chloride intracellular channel protein 4 (CLIC4) from Pongo abelii (Sumatran orangutan).